Reading from the N-terminus, the 231-residue chain is ATP phosphoribosyltransferase (231 aa).

The protein belongs to the ATP phosphoribosyltransferase family. Short subfamily. In terms of assembly, heteromultimer composed of HisG and HisZ subunits.

It localises to the cytoplasm. The catalysed reaction is 1-(5-phospho-beta-D-ribosyl)-ATP + diphosphate = 5-phospho-alpha-D-ribose 1-diphosphate + ATP. It functions in the pathway amino-acid biosynthesis; L-histidine biosynthesis; L-histidine from 5-phospho-alpha-D-ribose 1-diphosphate: step 1/9. In terms of biological role, catalyzes the condensation of ATP and 5-phosphoribose 1-diphosphate to form N'-(5'-phosphoribosyl)-ATP (PR-ATP). Has a crucial role in the pathway because the rate of histidine biosynthesis seems to be controlled primarily by regulation of HisG enzymatic activity. The sequence is that of ATP phosphoribosyltransferase from Brucella suis (strain ATCC 23445 / NCTC 10510).